The primary structure comprises 216 residues: Lipoprotein signal peptidase (216 aa).

The segment at 1–21 (MATSRTAPTRAPSLRSSPALE) is disordered. 3 helical membrane passes run 31–51 (VGAL…DQIT), 89–109 (GSTW…IWYA), and 114–134 (STAW…NLTD). Residues aspartate 149 and aspartate 164 contribute to the active site. Residues 159 to 179 (IFNLADVAIVFSMGLFLLLTL) traverse the membrane as a helical segment. The disordered stretch occupies residues 189-216 (QRDEGAGVSSASPAGDESAADKPENLSA). The segment covering 207-216 (AADKPENLSA) has biased composition (basic and acidic residues).

This sequence belongs to the peptidase A8 family.

The protein resides in the cell membrane. It carries out the reaction Release of signal peptides from bacterial membrane prolipoproteins. Hydrolyzes -Xaa-Yaa-Zaa-|-(S,diacylglyceryl)Cys-, in which Xaa is hydrophobic (preferably Leu), and Yaa (Ala or Ser) and Zaa (Gly or Ala) have small, neutral side chains.. Its pathway is protein modification; lipoprotein biosynthesis (signal peptide cleavage). This protein specifically catalyzes the removal of signal peptides from prolipoproteins. This chain is Lipoprotein signal peptidase, found in Leifsonia xyli subsp. xyli (strain CTCB07).